The sequence spans 700 residues: MESAGKQDNNATQQLPQRQQRGNQQANKNLGKHNAQKQNDSADGGPAEKKQRFGGPNAQNQNQNQNQNGGVTGGGGAVGGPNQNKNFGNNKGGFVGNRNRNNNRAGNQNRTFPGNNNPNQKPNNETSKADGPNALAKNNEPATAAAGQNQANQNANKGQNQRQGQNQNQNQVHGQGNQGGPGNQGGAGNQGGQGNQGGAGNQGNGQGFRGRNAGNNQGGGFSGGPQNQQRDNRNRSGPRPGGGAGGAMNSTNMGGGGGGGGGGGPRGGEDFFITQRLRSISGPTFELEPVEVPTETKFSGRNRLYVGNLTNDITDDELREMFKPYGEISEIFSNLDKNFTFLKVDYHPNAEKAKRALDGSMRKGRQLRVRFAPNATILRVSNLTPFVSNELLYKSFEIFGPIERASITVDDRGKHMGEGIVEFAKKSSASACLRMCNEKCFFLTASLRPCLVDPMEVNDDTDGLPEKAFNKKMPDFNQERSIGPRFADPNSFEHEYGSRWKQLHNLFKTKQDALKRELKMEEDKLEAQMEYARYEQETELLRQELRKREVDNERKKLEWEMREKQAEEMRKREEETMRRHQTEMQSHMNRQEEDMLRRQQETLFMKAQQLNSLLDQQEGFGGGGGGNNSTFDNFAGNSNSPFEVFRGNNNNNSTMIGNNAAPNTQDSFAFEFGVNNMNQGGNQRGNNGGGNNVPWGRRRF.

The tract at residues 1–270 (MESAGKQDNN…GGGGPRGGED (270 aa)) is disordered. Low complexity-rich tracts occupy residues 9–29 (NNATQQLPQRQQRGNQQANKN) and 54–69 (GGPNAQNQNQNQNQNG). Over residues 70 to 79 (GVTGGGGAVG) the composition is skewed to gly residues. Composition is skewed to low complexity over residues 80 to 89 (GPNQNKNFGN), 96 to 124 (GNRNRNNNRAGNQNRTFPGNNNPNQKPNN), and 144 to 175 (AAAGQNQANQNANKGQNQRQGQNQNQNQVHGQ). Gly residues predominate over residues 176-208 (GNQGGPGNQGGAGNQGGQGNQGGAGNQGNGQGF). At S236 the chain carries Phosphoserine. Residues 253–266 (MGGGGGGGGGGGPR) are compositionally biased toward gly residues. RRM domains lie at 302–374 (NRLY…FAPN) and 376–457 (TILR…PMEV). Positions 505 to 616 (NLFKTKQDAL…AQQLNSLLDQ (112 aa)) form a coiled coil. A compositionally biased stretch (basic and acidic residues) spans 568-582 (EMRKREEETMRRHQT). Disordered regions lie at residues 568 to 591 (EMRKREEETMRRHQTEMQSHMNRQ) and 677 to 700 (MNQGGNQRGNNGGGNNVPWGRRRF). Residues 682–691 (NQRGNNGGGN) are compositionally biased toward gly residues.

Required for normal vision and courtship behavior in Drosophila. The protein is Protein no-on-transient A (nonA) of Drosophila melanogaster (Fruit fly).